A 139-amino-acid polypeptide reads, in one-letter code: Thioredoxin 2 (139 aa).

A zinc finger spans residues 5 to 18 (CTHCQAINRIPDDR). Residues 26-139 (GRCGHDLFDG…PFDSWLNESL (114 aa)) form the Thioredoxin domain. A disulfide bridge links Cys64 with Cys67.

This sequence belongs to the thioredoxin family.

Its subcellular location is the cytoplasm. It catalyses the reaction [protein]-dithiol + NAD(+) = [protein]-disulfide + NADH + H(+). It carries out the reaction [protein]-dithiol + NADP(+) = [protein]-disulfide + NADPH + H(+). Efficient electron donor for the essential enzyme ribonucleotide reductase. Is also able to reduce the interchain disulfide bridges of insulin. The chain is Thioredoxin 2 (trxC) from Escherichia coli O6:H1 (strain CFT073 / ATCC 700928 / UPEC).